The chain runs to 218 residues: Eukaryotic translation initiation factor 4E-1 (218 aa).

The segment covering 1–11 has biased composition (basic and acidic residues); that stretch reads MQTEQPPKESQ. Disordered stretches follow at residues 1–20 and 198–218; these read MQTE…SEPQ and FSAH…RMSV. Over residues 206–218 the composition is skewed to polar residues; that stretch reads KSGSTRAKTRMSV.

The protein belongs to the eukaryotic initiation factor 4E family. In terms of assembly, eIF4F is a multi-subunit complex, the composition of which varies with external and internal environmental conditions. It is composed of at least eIF4A, eIF4E and eIF4G. eIF4E is also known to interact with other partners.

In terms of biological role, recognizes and binds the 7-methylguanosine-containing mRNA cap during an early step in the initiation of protein synthesis and facilitates ribosome binding by inducing the unwinding of the mRNAs secondary structures. The polypeptide is Eukaryotic translation initiation factor 4E-1 (tif451) (Schizosaccharomyces pombe (strain 972 / ATCC 24843) (Fission yeast)).